Reading from the N-terminus, the 203-residue chain is Glutathione S-transferase (203 aa).

A GST N-terminal domain is found at 2 to 79 (PDYKVYYFNV…YLANQVGLAG (78 aa)). Residues Tyr-8, Trp-39, Lys-43, 49-51 (GQM), and 63-64 (QS) contribute to the glutathione site. Residues 81–203 (DDWENLMIDT…YIAKRPITEV (123 aa)) enclose the GST C-terminal domain.

It belongs to the GST superfamily. Sigma family. As to quaternary structure, homodimer.

The enzyme catalyses RX + glutathione = an S-substituted glutathione + a halide anion + H(+). In terms of biological role, conjugation of reduced glutathione to a wide number of exogenous and endogenous hydrophobic electrophiles. The sequence is that of Glutathione S-transferase (GstS1) from Anopheles gambiae (African malaria mosquito).